Reading from the N-terminus, the 554-residue chain is Glucose-6-phosphate isomerase 1 (554 aa).

Glu359 functions as the Proton donor in the catalytic mechanism. Active-site residues include His390 and Lys518.

This sequence belongs to the GPI family.

Its subcellular location is the cytoplasm. It carries out the reaction alpha-D-glucose 6-phosphate = beta-D-fructose 6-phosphate. It participates in carbohydrate biosynthesis; gluconeogenesis. It functions in the pathway carbohydrate degradation; glycolysis; D-glyceraldehyde 3-phosphate and glycerone phosphate from D-glucose: step 2/4. Catalyzes the reversible isomerization of glucose-6-phosphate to fructose-6-phosphate. The chain is Glucose-6-phosphate isomerase 1 from Pseudomonas putida (strain ATCC 47054 / DSM 6125 / CFBP 8728 / NCIMB 11950 / KT2440).